We begin with the raw amino-acid sequence, 309 residues long: Homoserine kinase (309 aa).

95 to 105 lines the ATP pocket; the sequence is PQSRGLGSSAA.

The protein belongs to the GHMP kinase family. Homoserine kinase subfamily.

It is found in the cytoplasm. It catalyses the reaction L-homoserine + ATP = O-phospho-L-homoserine + ADP + H(+). It functions in the pathway amino-acid biosynthesis; L-threonine biosynthesis; L-threonine from L-aspartate: step 4/5. Catalyzes the ATP-dependent phosphorylation of L-homoserine to L-homoserine phosphate. The sequence is that of Homoserine kinase from Corynebacterium glutamicum (strain R).